Reading from the N-terminus, the 98-residue chain is Large ribosomal subunit protein bL28 (98 aa).

In terms of assembly, part of the 50S ribosomal subunit.

This chain is Large ribosomal subunit protein bL28 (rpmB), found in Thermus thermophilus (strain ATCC 27634 / DSM 579 / HB8).